The chain runs to 525 residues: Protein-serine O-palmitoleoyltransferase porcupine (525 aa).

Helical transmembrane passes span 83 to 103 (VMQY…LCLL), 125 to 145 (LIIL…LAAV), 159 to 179 (GAQV…LLIW), 220 to 240 (FAYL…WVSF), 260 to 280 (LLPN…VAPA), 301 to 318 (VRSS…LLVA), 395 to 415 (SLLH…AFLA), 467 to 487 (NLAF…VLLG), and 505 to 525 (QAGY…LFIS). Residue H398 is part of the active site.

It belongs to the membrane-bound acyltransferase family. Porcupine subfamily. In terms of assembly, interacts with wg and Wnt5.

Its subcellular location is the endoplasmic reticulum membrane. It carries out the reaction [Wnt protein]-L-serine + (9Z)-hexadecenoyl-CoA = [Wnt protein]-O-(9Z)-hexadecenoyl-L-serine + CoA. Protein-serine O-palmitoleoyltransferase that acts as a key regulator of the Wnt signaling pathway by mediating the attachment of palmitoleate, a 16-carbon monounsaturated fatty acid (C16:1(9Z)), to Wnt proteins. Serine palmitoleoylation of Wnt proteins is required for efficient binding to frizzled receptors. Also facilitates the glycosylation of Wnt family members, including wg and Wnt5. The cotranslational disulfide bond formation of wg competes with the N-glycosylation. Porc stimulates the post-translational N-glycosylation by anchoring wg at the ER membrane, probably through acylation. The chain is Protein-serine O-palmitoleoyltransferase porcupine from Drosophila melanogaster (Fruit fly).